The primary structure comprises 339 residues: HPr kinase/phosphorylase (339 aa).

Residues His153 and Lys174 contribute to the active site. 168–175 (GKSGLGKS) serves as a coordination point for ATP. Residue Ser175 coordinates Mg(2+). Asp192 acts as the Proton acceptor; for phosphorylation activity. Proton donor; for dephosphorylation activity in catalysis. The segment at 216–225 (MEIRGLGVVD) is important for the catalytic mechanism of both phosphorylation and dephosphorylation. Residue Glu217 coordinates Mg(2+). Residue Arg258 is part of the active site. The interval 279-284 (PINPGK) is important for the catalytic mechanism of dephosphorylation.

The protein belongs to the HPrK/P family. In terms of assembly, homohexamer. Mg(2+) serves as cofactor.

The enzyme catalyses [HPr protein]-L-serine + ATP = [HPr protein]-O-phospho-L-serine + ADP + H(+). It carries out the reaction [HPr protein]-O-phospho-L-serine + phosphate + H(+) = [HPr protein]-L-serine + diphosphate. Catalyzes the ATP- as well as the pyrophosphate-dependent phosphorylation of a specific serine residue in HPr, a phosphocarrier protein of the phosphoenolpyruvate-dependent sugar phosphotransferase system (PTS). HprK/P also catalyzes the pyrophosphate-producing, inorganic phosphate-dependent dephosphorylation (phosphorolysis) of seryl-phosphorylated HPr (P-Ser-HPr). The sequence is that of HPr kinase/phosphorylase from Chlorobium phaeobacteroides (strain BS1).